Reading from the N-terminus, the 28-residue chain is Cycloviolin-B (28 aa).

Positions 1–28 form a cross-link, cyclopeptide (Gly-Asn); the sequence is GTACGESCYVLPCFTVGCTCTSSQCFKN. Intrachain disulfides connect C4-C18, C8-C20, and C13-C25.

This is a cyclic peptide.

In terms of biological role, probably participates in a plant defense mechanism. Has anti-HIV activity. The protein is Cycloviolin-B of Leonia cymosa (Sacha uba).